A 398-amino-acid polypeptide reads, in one-letter code: Phosphoglycerate kinase (398 aa).

Residues 21–23 (DFN), Arg-36, 59–62 (HLGR), Arg-119, and Arg-157 each bind substrate. ATP is bound by residues Lys-208, Gly-296, Glu-327, and 354–357 (GGDS).

It belongs to the phosphoglycerate kinase family. As to quaternary structure, monomer.

It is found in the cytoplasm. The enzyme catalyses (2R)-3-phosphoglycerate + ATP = (2R)-3-phospho-glyceroyl phosphate + ADP. It participates in carbohydrate degradation; glycolysis; pyruvate from D-glyceraldehyde 3-phosphate: step 2/5. This chain is Phosphoglycerate kinase, found in Streptococcus equi subsp. zooepidemicus (strain MGCS10565).